The chain runs to 402 residues: Phosphoglycerate kinase (402 aa).

Residues 24–26 (DFN), R40, 63–66 (HFGR), R122, and R155 contribute to the substrate site. ATP contacts are provided by residues K206, G297, E328, and 357–360 (GGDS).

This sequence belongs to the phosphoglycerate kinase family. Monomer.

The protein resides in the cytoplasm. It catalyses the reaction (2R)-3-phosphoglycerate + ATP = (2R)-3-phospho-glyceroyl phosphate + ADP. Its pathway is carbohydrate degradation; glycolysis; pyruvate from D-glyceraldehyde 3-phosphate: step 2/5. In Synechococcus sp. (strain ATCC 27144 / PCC 6301 / SAUG 1402/1) (Anacystis nidulans), this protein is Phosphoglycerate kinase.